Consider the following 441-residue polypeptide: Glutamate-1-semialdehyde 2,1-aminomutase (441 aa).

Lysine 275 carries the N6-(pyridoxal phosphate)lysine modification.

The protein belongs to the class-III pyridoxal-phosphate-dependent aminotransferase family. HemL subfamily. As to quaternary structure, homodimer. The cofactor is pyridoxal 5'-phosphate.

It localises to the cytoplasm. The enzyme catalyses (S)-4-amino-5-oxopentanoate = 5-aminolevulinate. It functions in the pathway porphyrin-containing compound metabolism; protoporphyrin-IX biosynthesis; 5-aminolevulinate from L-glutamyl-tRNA(Glu): step 2/2. This chain is Glutamate-1-semialdehyde 2,1-aminomutase, found in Deinococcus deserti (strain DSM 17065 / CIP 109153 / LMG 22923 / VCD115).